Reading from the N-terminus, the 301-residue chain is Porphobilinogen deaminase (301 aa).

Cysteine 240 bears the S-(dipyrrolylmethanemethyl)cysteine mark.

Belongs to the HMBS family. Monomer. Dipyrromethane is required as a cofactor.

It catalyses the reaction 4 porphobilinogen + H2O = hydroxymethylbilane + 4 NH4(+). Its pathway is porphyrin-containing compound metabolism; protoporphyrin-IX biosynthesis; coproporphyrinogen-III from 5-aminolevulinate: step 2/4. In terms of biological role, tetrapolymerization of the monopyrrole PBG into the hydroxymethylbilane pre-uroporphyrinogen in several discrete steps. In Clostridioides difficile (strain 630) (Peptoclostridium difficile), this protein is Porphobilinogen deaminase.